Here is a 173-residue protein sequence, read N- to C-terminus: Translation initiation factor IF-3 (173 aa).

It belongs to the IF-3 family. In terms of assembly, monomer.

Its subcellular location is the cytoplasm. In terms of biological role, IF-3 binds to the 30S ribosomal subunit and shifts the equilibrium between 70S ribosomes and their 50S and 30S subunits in favor of the free subunits, thus enhancing the availability of 30S subunits on which protein synthesis initiation begins. The sequence is that of Translation initiation factor IF-3 from Caulobacter vibrioides (strain ATCC 19089 / CIP 103742 / CB 15) (Caulobacter crescentus).